A 229-amino-acid polypeptide reads, in one-letter code: Small ribosomal subunit protein uS3 (229 aa).

The KH type-2 domain maps to 39 to 107 (VRQYLTEKLK…TAQINIAEIR (69 aa)).

This sequence belongs to the universal ribosomal protein uS3 family. As to quaternary structure, part of the 30S ribosomal subunit. Forms a tight complex with proteins S10 and S14.

Binds the lower part of the 30S subunit head. Binds mRNA in the 70S ribosome, positioning it for translation. This chain is Small ribosomal subunit protein uS3, found in Shewanella denitrificans (strain OS217 / ATCC BAA-1090 / DSM 15013).